The following is a 29-amino-acid chain: Cytochrome b6-f complex subunit 8 (29 aa).

Residues 3-23 form a helical membrane-spanning segment; sequence IVSLAWAALMIVFTFSLSLVV.

This sequence belongs to the PetN family. As to quaternary structure, the 4 large subunits of the cytochrome b6-f complex are cytochrome b6, subunit IV (17 kDa polypeptide, PetD), cytochrome f and the Rieske protein, while the 4 small subunits are PetG, PetL, PetM and PetN. The complex functions as a dimer.

Its subcellular location is the plastid membrane. Component of the cytochrome b6-f complex, which mediates electron transfer between photosystem II (PSII) and photosystem I (PSI), cyclic electron flow around PSI, and state transitions. This is Cytochrome b6-f complex subunit 8 from Cuscuta exaltata (Tall dodder).